Consider the following 158-residue polypeptide: Transcription elongation factor GreA (158 aa).

Residues 49–69 (SEYESAKDEQAFVEGRISQIE) are a coiled coil. Residues 102–125 (EEPESYTIVGESESDPLSGKISNE) form a disordered region.

Belongs to the GreA/GreB family.

In terms of biological role, necessary for efficient RNA polymerase transcription elongation past template-encoded arresting sites. The arresting sites in DNA have the property of trapping a certain fraction of elongating RNA polymerases that pass through, resulting in locked ternary complexes. Cleavage of the nascent transcript by cleavage factors such as GreA or GreB allows the resumption of elongation from the new 3'terminus. GreA releases sequences of 2 to 3 nucleotides. The sequence is that of Transcription elongation factor GreA from Limosilactobacillus fermentum (strain NBRC 3956 / LMG 18251) (Lactobacillus fermentum).